Reading from the N-terminus, the 302-residue chain is DDRGK domain-containing protein 1 (302 aa).

Residues 1-5 lie on the Lumenal side of the membrane; that stretch reads MDGGG. A helical transmembrane segment spans residues 6-26; that stretch reads GMLGAVVCLLLVFAIFPLLLW. The Cytoplasmic portion of the chain corresponds to 27 to 302; the sequence is RRRSDAAHRL…DENAAAGTEL (276 aa). Disordered regions lie at residues 36–151 and 279–302; these read LPPQ…EEAR and DLEPKPQYNEESNLDENAAAGTEL. Residues 79–91 are compositionally biased toward acidic residues; that stretch reads VDDADSDLEEEIQ. Residues 103–151 show a composition bias toward basic and acidic residues; the sequence is KRQDREAQRQAEEAARDSRRTKQDRYAEMRRKKDEEREAQERLMEEEAR.

This sequence belongs to the DDRGK1 family.

The protein localises to the endoplasmic reticulum membrane. In terms of biological role, substrate adapter for ufmylation, the covalent attachment of the ubiquitin-like modifier UFM1 to substrate proteins. This chain is DDRGK domain-containing protein 1, found in Oryza sativa subsp. japonica (Rice).